We begin with the raw amino-acid sequence, 754 residues long: MLWNTQYFRIEGMISLGWPRLAKTSILKFVPIAQNHRIRKMKVQDDFILTIDDSEDDIHYDDYDADAVDEEMPSNVELKKKSKKATPAKDSDFNGEFLFEADVNKDLSSATDMNWDFDMGSKTESNRASNTVDLDAIISRNRKPDDDEFPSSFPSEEELQEPEQENIDSDDEDLAIDGFGAGAIAENEDESSQDESESEEEDDITEPVPSFANISTQDFNSDSAAGSSDSEEDEEEIAKKNAFFAEGDKEKSMMTTTHSSFQSMNLSRPILKGLSNLGFEVPTQIQDKTIPLALLGKDIVGAAVTGSGKTAAFIVPILERLLYRPKKVPTTRVLILCPTRELAMQCHSVATKIASFTDIMVCLCIGGLSLKLQEQELRKRPDIVIATPGRFIDHMRNSQGFTVENIEIMVMDEADRMLEDGFADELNEIIQACPKSRQTMLFSATMTDKVDDLIRLSLNRPVRVFVDNKKTTAKLLTQEFVRVRPQRELLRPAMLIYLCKELFHRRTIIFFRSKAFAHKMRVIFGLLSLNATEIHGSLSQEQRVRALEDFRDGKCNYLLATDVASRGIDIKGIEVVINYEAPATHEVYLHRVGRTARAGRSGRAITLAGEGDRKVLKGVFKNSSAQNTKLVNRNLDFNKVEKFGKEIEELEPVVQKVLDEEKQERELKIAERDLKKGENIMKYGDEIRSRPARTWFQSEKDKQASKASEAKDKKSLAKRKKQMEKEEVPRAYKKTKNDRLSNKKSTKKSKSKRK.

Positions 121–237 (SKTESNRASN…SDSEEDEEEI (117 aa)) are disordered. 2 stretches are compositionally biased toward acidic residues: residues 155–175 (SEEE…EDLA) and 186–205 (ENED…DDIT). A Q motif motif is present at residues 259 to 287 (SSFQSMNLSRPILKGLSNLGFEVPTQIQD). Positions 290–464 (IPLALLGKDI…RLSLNRPVRV (175 aa)) constitute a Helicase ATP-binding domain. 303–310 (AVTGSGKT) provides a ligand contact to ATP. The DEAD box motif lies at 412 to 415 (DEAD). One can recognise a Helicase C-terminal domain in the interval 475–641 (LLTQEFVRVR…NRNLDFNKVE (167 aa)). The stretch at 655-728 (QKVLDEEKQE…RKKQMEKEEV (74 aa)) forms a coiled coil. Positions 692 to 754 (ARTWFQSEKD…STKKSKSKRK (63 aa)) are disordered. Composition is skewed to basic and acidic residues over residues 698-715 (SEKD…DKKS) and 723-741 (MEKE…DRLS). The span at 742-754 (NKKSTKKSKSKRK) shows a compositional bias: basic residues.

It belongs to the DEAD box helicase family. DDX27/DRS1 subfamily. As to quaternary structure, associates with pre-ribosomal particles.

Its subcellular location is the nucleus. It localises to the nucleolus. The catalysed reaction is ATP + H2O = ADP + phosphate + H(+). ATP-binding RNA helicase involved in ribosome assembly. The protein is ATP-dependent RNA helicase drs1 (drs1) of Schizosaccharomyces pombe (strain 972 / ATCC 24843) (Fission yeast).